Reading from the N-terminus, the 288-residue chain is Programmed cell death protein 1 (288 aa).

The signal sequence occupies residues 1 to 24 (MWVRQVPWSFTWAVLQLSWQSGWL). At 25–169 (LEVPNGPWRS…PKPEGRFQGM (145 aa)) the chain is on the extracellular side. An Ig-like V-type domain is found at 31 to 139 (PWRSLTFYPA…PKAKIEESPG (109 aa)). 4 N-linked (GlcNAc...) asparagine glycosylation sites follow: asparagine 49, asparagine 58, asparagine 74, and asparagine 116. Cysteine 54 and cysteine 123 are oxidised to a cystine. The tract at residues 70 to 77 (LSPSNQTE) is interaction with CD274/PDCD1L1. The chain crosses the membrane as a helical span at residues 170 to 190 (VIGIMSALVGIPVLLLLAWAL). The Cytoplasmic segment spans residues 191-288 (AVFCSTSMSE…HEDGHCSWPL (98 aa)). The ITIM motif motif lies at 223–228 (VAYEEL). Tyrosine 225 bears the Phosphotyrosine mark. Lysine 235 is covalently cross-linked (Glycyl lysine isopeptide (Lys-Gly) (interchain with G-Cter in ubiquitin)). Phosphothreonine; by MAPK3 is present on threonine 236. The ITSM motif signature appears at 247–251 (EYATI). Tyrosine 248 is subject to Phosphotyrosine. The disordered stretch occupies residues 263–288 (GRRGSADGLQGPRPPRHEDGHCSWPL). The span at 277–288 (PRHEDGHCSWPL) shows a compositional bias: basic and acidic residues.

Monomer. Interacts with CD274/PDCD1L1. Interacts with CD273/PDCD1LG2. Interacts with FBXO38; leading to ubiquitination and degradation by the proteasome. Post-translationally, ubiquitinated at Lys-235 by the SCF(FBXO38) complex, leading to its proteasomal degradation. Ubiquitinated via 'Lys-48'-linked polyubiquitin chains. Deubiquitinated and thus stabilized by USP5. In terms of processing, tyrosine phosphorylated at Tyr-225 (within ITIM motif) and Tyr-248 (ITSM motif) upon ligand binding. Phosphorylation at Tyr-248 promotes the recruitment of the protein tyrosine phosphatase PTPN11/SHP-2 that mediates dephosphorylation of key TCR proximal signaling molecules, such as ZAP70, PRKCQ/PKCtheta and CD247/CD3zeta. Phosphorylation at Thr-236 promotes the recruitment of the deubiquitinase USP5. Thymus-specific.

It localises to the cell membrane. Inhibitory receptor on antigen activated T-cells that plays a critical role in induction and maintenance of immune tolerance to self. Delivers inhibitory signals upon binding to ligands, such as CD274/PDCD1L1 and CD273/PDCD1LG2. Following T-cell receptor (TCR) engagement, PDCD1 associates with CD3-TCR in the immunological synapse and directly inhibits T-cell activation. Suppresses T-cell activation through the recruitment of PTPN11/SHP-2: following ligand-binding, PDCD1 is phosphorylated within the ITSM motif, leading to the recruitment of the protein tyrosine phosphatase PTPN11/SHP-2 that mediates dephosphorylation of key TCR proximal signaling molecules, such as ZAP70, PRKCQ/PKCtheta and CD247/CD3zeta. The PDCD1-mediated inhibitory pathway is exploited by tumors to attenuate anti-tumor immunity and facilitate tumor survival. The sequence is that of Programmed cell death protein 1 from Mus musculus (Mouse).